A 169-amino-acid chain; its full sequence is Thaumatin-like pathogenesis-related protein 3 (169 aa).

An N-terminal signal peptide occupies residues 1-21 (MATSSAVLFLLLAVFAAGASA).

This sequence belongs to the thaumatin family.

Its function is as follows. Associated with resistance against stem rust fungi. The sequence is that of Thaumatin-like pathogenesis-related protein 3 (RASTL-3) from Avena sativa (Oat).